A 512-amino-acid polypeptide reads, in one-letter code: Dihydroniloticin synthase CYP71CD1 (512 aa).

Residues 7–27 form a helical membrane-spanning segment; that stretch reads YFTVTSLLVFLTFLLRLVWGW. Residue Cys-451 participates in heme binding.

This sequence belongs to the cytochrome P450 family. The cofactor is heme. Accumulates in mature fruits and in juice vesicles.

It is found in the membrane. The catalysed reaction is tirucalla-7,24-dien-3beta-ol + 2 reduced [NADPH--hemoprotein reductase] + 2 O2 = dihydroniloticin + 2 oxidized [NADPH--hemoprotein reductase] + 2 H2O + 2 H(+). Its pathway is secondary metabolite biosynthesis; terpenoid biosynthesis. Monooxygenase involved in the biosynthesis of limonoids triterpene natural products such as limonin, a compound with insecticidal activity responsible for the bitter taste in citrus. Catalyzes the conversion of tirucalladienol to dihydroniloticin. The protein is Dihydroniloticin synthase CYP71CD1 of Citrus sinensis (Sweet orange).